Consider the following 129-residue polypeptide: Ribulose bisphosphate carboxylase small subunit (129 aa).

Residues 104–120 (ENEPSLRMTRTESDGRS) show a composition bias toward basic and acidic residues. The interval 104–129 (ENEPSLRMTRTESDGRSQHYTWETQR) is disordered.

Belongs to the RuBisCO small chain family. In terms of assembly, heterohexadecamer of 8 large and 8 small subunits.

RuBisCO catalyzes two reactions: the carboxylation of D-ribulose 1,5-bisphosphate, the primary event in carbon dioxide fixation, as well as the oxidative fragmentation of the pentose substrate. Both reactions occur simultaneously and in competition at the same active site. Although the small subunit is not catalytic it is essential for maximal activity. This Sinorhizobium medicae (strain WSM419) (Ensifer medicae) protein is Ribulose bisphosphate carboxylase small subunit.